The following is an 842-amino-acid chain: Xyloglucanase Xgh74A (842 aa).

The N-terminal stretch at 1–32 is a signal peptide; the sequence is MVKKFTSKIKAAVFAAVVAATAIFGPAISSQA. The Nucleophile role is filled by D70. BNR repeat units lie at residues 134–144, 185–196, 252–262, and 358–368; these read RSTDRGETWEK, WRSTDYGVTWSK, YRSTDGGVTWK, and FRSTDGGATWK. D480 (proton donor) is an active-site residue. 5 BNR repeats span residues 533-541, 577-586, 616-626, 660-671, and 708-718; these read FSYDGGRNW, VTTDNGNSWK, YISTDGGLTFT, WRSTDGGYTFEK, and FRSDDAGKTWV. Residues 771-841 form the Dockerin domain; sequence DKGLVGDLNG…LLQAIPELPK (71 aa).

The protein belongs to the glycosyl hydrolase 74 family.

Its function is as follows. Hydrolyzes the glucosidic bonds of unbranched Glc residues in tamarind seed xyloglucan, producing XXXG, XLXG, XXLG and XLLG. Has low activity on carboxymethylcellulose, lichenan,hydroxyethylcellulose and glucuronoxylan, and no activity on xylan, polygalaturonic acid, wheat arabinoxylan, rhamnogalacturan, curdlan, laminarin, galactomannan, galactan, arabinan and pachyman or amorphous cellulose. The polypeptide is Xyloglucanase Xgh74A (Acetivibrio thermocellus (strain ATCC 27405 / DSM 1237 / JCM 9322 / NBRC 103400 / NCIMB 10682 / NRRL B-4536 / VPI 7372) (Clostridium thermocellum)).